Consider the following 88-residue polypeptide: Small ribosomal subunit protein uS17 (88 aa).

The protein belongs to the universal ribosomal protein uS17 family. In terms of assembly, part of the 30S ribosomal subunit.

One of the primary rRNA binding proteins, it binds specifically to the 5'-end of 16S ribosomal RNA. The sequence is that of Small ribosomal subunit protein uS17 from Pseudomonas putida (strain ATCC 700007 / DSM 6899 / JCM 31910 / BCRC 17059 / LMG 24140 / F1).